The following is a 491-amino-acid chain: Cytosolic Fe-S cluster assembly factor NAR1 (491 aa).

8 residues coordinate [4Fe-4S] cluster: cysteine 20, cysteine 65, cysteine 68, cysteine 71, cysteine 177, cysteine 232, cysteine 414, and cysteine 418.

It belongs to the NARF family.

In terms of biological role, component of the cytosolic Fe/S protein assembly machinery. Required for maturation of extramitochondrial Fe/S proteins. May play a role in the transfer of pre-assembled Fe/S clusters to target apoproteins. This is Cytosolic Fe-S cluster assembly factor NAR1 (NAR1) from Yarrowia lipolytica (strain CLIB 122 / E 150) (Yeast).